A 134-amino-acid chain; its full sequence is Cytochrome b5 (134 aa).

Ala-2 is modified (N-acetylalanine). 3 positions are modified to N6-acetyllysine: Lys-7, Lys-10, and Lys-19. Residues 9-85 (VKYYTLEEIQ…SKTFIIGELH (77 aa)) form the Cytochrome b5 heme-binding domain. Heme-binding residues include His-44 and His-68. Residues 109–131 (WWTNWLIPAISALFVALIYHLYT) traverse the membrane as a helical segment.

The protein belongs to the cytochrome b5 family.

It localises to the endoplasmic reticulum membrane. The protein localises to the microsome membrane. Functionally, cytochrome b5 is a membrane-bound hemoprotein functioning as an electron carrier for several membrane-bound oxygenases. This is Cytochrome b5 (CYB5A) from Bos taurus (Bovine).